Consider the following 99-residue polypeptide: Protein S100-A11 (99 aa).

Met1 is modified (N-acetylmethionine). At Thr8 the chain carries Phosphothreonine. EF-hand domains follow at residues 10 to 47 and 53 to 88; these read RCIE…ELAA and KDPG…LAIA. Ca(2+) is bound by residues Asn29, Lys31, Glu36, Asp66, Asp68, Asp70, Gln72, and Glu77.

It belongs to the S-100 family. In terms of assembly, homodimer; disulfide-linked. Phosphorylation at Thr-8 significantly suppresses homodimerization and promotes association with NCL/nucleolin which induces nuclear translocation.

Its subcellular location is the cytoplasm. It is found in the nucleus. In terms of biological role, facilitates the differentiation and the cornification of keratinocytes. The protein is Protein S100-A11 (S100A11) of Sus scrofa (Pig).